Reading from the N-terminus, the 110-residue chain is Large ribosomal subunit protein uL22 (110 aa).

It belongs to the universal ribosomal protein uL22 family. In terms of assembly, part of the 50S ribosomal subunit.

Functionally, this protein binds specifically to 23S rRNA; its binding is stimulated by other ribosomal proteins, e.g. L4, L17, and L20. It is important during the early stages of 50S assembly. It makes multiple contacts with different domains of the 23S rRNA in the assembled 50S subunit and ribosome. The globular domain of the protein is located near the polypeptide exit tunnel on the outside of the subunit, while an extended beta-hairpin is found that lines the wall of the exit tunnel in the center of the 70S ribosome. This Actinobacillus pleuropneumoniae serotype 5b (strain L20) protein is Large ribosomal subunit protein uL22.